A 1312-amino-acid polypeptide reads, in one-letter code: Rho GTPase-activating protein gacG (1312 aa).

Disordered regions lie at residues 52–74, 111–158, 314–519, 762–831, 1185–1230, and 1282–1312; these read VENN…KRSQ, SNNN…SSSD, ISSS…PRNF, NSIS…SSTG, NNNN…SSSV, and TGTS…IVEE. Composition is skewed to low complexity over residues 53 to 67 and 111 to 146; these read ENNN…NSEN and SNNN…YSPR. The segment covering 147-158 has biased composition (polar residues); that stretch reads NNNNNFTESSSD. 3 stretches are compositionally biased toward low complexity: residues 328 to 355, 373 to 397, and 414 to 436; these read TTAA…ANNS, HHSS…IGNS, and LNLT…NNGN. Over residues 437-449 the composition is skewed to polar residues; that stretch reads EVIQSSSSTSSPR. Residues 479 to 507 are compositionally biased toward low complexity; it reads SSTNSLNNSTSSLKSSNNNILQQQQQQQQ. 2 stretches are compositionally biased toward polar residues: residues 508–518 and 763–776; these read HYDSAPTTPRN and SIST…GNIA. Residues 792 to 816 show a composition bias toward low complexity; that stretch reads NNNNNNNNNNNNNNNNNNNNNNNNN. Residues 1030-1212 form the Rho-GAP domain; it reads SKIDPITGFN…HHNSHHHRDN (183 aa). Over residues 1196–1210 the composition is skewed to basic residues; it reads HHHHHHHHHNSHHHR. Low complexity-rich tracts occupy residues 1213–1222 and 1282–1305; these read NNNNSNNNSS and TGTS…RSPS.

The protein localises to the cytoplasm. In terms of biological role, rho GTPase-activating protein involved in the signal transduction pathway. The polypeptide is Rho GTPase-activating protein gacG (gacG) (Dictyostelium discoideum (Social amoeba)).